The primary structure comprises 138 residues: MRTLWIVAVLLLGVEGNLLQFNKMIKIMTKKNAIPFYSSYGCYCGWGGQGKPKDATDRCCFVHDCCYGKLTDCSPKSDIYSYSWKTGIIICGEGTECEKKICECDRAAAVCLGHNLRTYKKRYMFYPDFLCTDPSEKC.

The signal sequence occupies residues 1–16; sequence MRTLWIVAVLLLGVEG. 7 disulfide bridges follow: Cys-42–Cys-131, Cys-44–Cys-60, Cys-59–Cys-111, Cys-65–Cys-138, Cys-66–Cys-104, Cys-73–Cys-97, and Cys-91–Cys-102. Ca(2+) contacts are provided by Tyr-43, Gly-45, and Gly-47. His-63 is a catalytic residue. Asp-64 contributes to the Ca(2+) binding site. Residue Asp-105 is part of the active site.

The protein belongs to the phospholipase A2 family. Group II subfamily. D49 sub-subfamily. In terms of assembly, homodimer. Ca(2+) serves as cofactor. As to expression, expressed by the venom gland.

The protein localises to the secreted. The enzyme catalyses a 1,2-diacyl-sn-glycero-3-phosphocholine + H2O = a 1-acyl-sn-glycero-3-phosphocholine + a fatty acid + H(+). Snake venom phospholipase A2 (PLA2) that displays edema-inducing activities, as well as presynaptic neurotoxicity and low myotoxicity. PLA2 catalyzes the calcium-dependent hydrolysis of the 2-acyl groups in 3-sn-phosphoglycerides. This Protobothrops mucrosquamatus (Taiwan habu) protein is Basic phospholipase A2 trimucrotoxin.